An 870-amino-acid polypeptide reads, in one-letter code: Leucine--tRNA ligase (870 aa).

The 'HIGH' region signature appears at 43-53 (PYPSGRLHMGH). The 'KMSKS' region signature appears at 626–630 (KMSKS). Lysine 629 serves as a coordination point for ATP.

The protein belongs to the class-I aminoacyl-tRNA synthetase family.

It is found in the cytoplasm. The enzyme catalyses tRNA(Leu) + L-leucine + ATP = L-leucyl-tRNA(Leu) + AMP + diphosphate. In Pseudoalteromonas atlantica (strain T6c / ATCC BAA-1087), this protein is Leucine--tRNA ligase.